A 382-amino-acid polypeptide reads, in one-letter code: Lipoyl synthase, mitochondrial (382 aa).

A mitochondrion-targeting transit peptide spans 1-30 (MHGRRHLAASLARALTYAPSRSISSTPSLL). The span at 25-34 (STPSLLQTLD) shows a compositional bias: polar residues. Residues 25-47 (STPSLLQTLDPSTPSPAAAPPTA) are disordered. 7 residues coordinate [4Fe-4S] cluster: cysteine 112, cysteine 117, cysteine 123, cysteine 143, cysteine 147, cysteine 150, and serine 359. Positions 128 to 348 (ETGTATATIM…RSLGVDMGFR (221 aa)) constitute a Radical SAM core domain.

Belongs to the radical SAM superfamily. Lipoyl synthase family. Requires [4Fe-4S] cluster as cofactor.

It is found in the mitochondrion. It catalyses the reaction [[Fe-S] cluster scaffold protein carrying a second [4Fe-4S](2+) cluster] + N(6)-octanoyl-L-lysyl-[protein] + 2 oxidized [2Fe-2S]-[ferredoxin] + 2 S-adenosyl-L-methionine + 4 H(+) = [[Fe-S] cluster scaffold protein] + N(6)-[(R)-dihydrolipoyl]-L-lysyl-[protein] + 4 Fe(3+) + 2 hydrogen sulfide + 2 5'-deoxyadenosine + 2 L-methionine + 2 reduced [2Fe-2S]-[ferredoxin]. Its pathway is protein modification; protein lipoylation via endogenous pathway; protein N(6)-(lipoyl)lysine from octanoyl-[acyl-carrier-protein]: step 2/2. In terms of biological role, catalyzes the radical-mediated insertion of two sulfur atoms into the C-6 and C-8 positions of the octanoyl moiety bound to the lipoyl domains of lipoate-dependent enzymes, thereby converting the octanoylated domains into lipoylated derivatives. The polypeptide is Lipoyl synthase, mitochondrial (Oryza sativa subsp. indica (Rice)).